The sequence spans 152 residues: UPF0178 protein Plav_1521 (152 aa).

The disordered stretch occupies residues 114–152 (LRETGQSKGGGPAFSKEDRSRFLRSLEDTVQAIRRRPPP). A compositionally biased stretch (basic and acidic residues) spans 128 to 140 (SKEDRSRFLRSLE).

The protein belongs to the UPF0178 family.

The sequence is that of UPF0178 protein Plav_1521 from Parvibaculum lavamentivorans (strain DS-1 / DSM 13023 / NCIMB 13966).